A 130-amino-acid polypeptide reads, in one-letter code: Acyl carrier protein 2, chloroplastic (130 aa).

The N-terminal 48 residues, 1-48, are a transit peptide targeting the chloroplast; that stretch reads MASITGSSVSFKCAPLQSSFNSKNYALKSSVTFWRRTPVMPRGLSVSC. Positions 52–127 constitute a Carrier domain; the sequence is PEMVTKVSDI…EAADMIEALQ (76 aa). S87 carries the O-(pantetheine 4'-phosphoryl)serine modification.

It belongs to the acyl carrier protein (ACP) family. In terms of processing, 4'-phosphopantetheine is transferred from CoA to a specific serine of apo-ACP by acpS. This modification is essential for activity because fatty acids are bound in thioester linkage to the sulfhydryl of the prosthetic group. As to expression, roots, leaves and seeds.

It localises to the plastid. The protein resides in the chloroplast. The protein operates within lipid metabolism; fatty acid biosynthesis. Carrier of the growing fatty acid chain in fatty acid biosynthesis. This Spinacia oleracea (Spinach) protein is Acyl carrier protein 2, chloroplastic (ACL1.2).